A 144-amino-acid chain; its full sequence is Large ribosomal subunit protein uL16 (144 aa).

A compositionally biased stretch (basic residues) spans 1-19 (MLLPKRVKYRRQHRPKTTG). The interval 1–23 (MLLPKRVKYRRQHRPKTTGRSKG) is disordered.

It belongs to the universal ribosomal protein uL16 family. Part of the 50S ribosomal subunit.

Its function is as follows. Binds 23S rRNA and is also seen to make contacts with the A and possibly P site tRNAs. The polypeptide is Large ribosomal subunit protein uL16 (Staphylococcus saprophyticus subsp. saprophyticus (strain ATCC 15305 / DSM 20229 / NCIMB 8711 / NCTC 7292 / S-41)).